Consider the following 425-residue polypeptide: Trigger factor (425 aa).

Positions 163–248 (GDTAVIDFEG…VHEIKTKELP (86 aa)) constitute a PPIase FKBP-type domain.

Belongs to the FKBP-type PPIase family. Tig subfamily.

It localises to the cytoplasm. The enzyme catalyses [protein]-peptidylproline (omega=180) = [protein]-peptidylproline (omega=0). Functionally, involved in protein export. Acts as a chaperone by maintaining the newly synthesized protein in an open conformation. Functions as a peptidyl-prolyl cis-trans isomerase. This Bacillus cereus (strain ATCC 10987 / NRS 248) protein is Trigger factor.